The sequence spans 368 residues: Glutamate 5-kinase (368 aa).

K13 is a binding site for ATP. Substrate contacts are provided by S54, D141, and N153. ATP is bound at residue 173 to 174; it reads SD. One can recognise a PUA domain in the interval 278–355; the sequence is RGVITVDEGA…DEIEAILGYA (78 aa).

It belongs to the glutamate 5-kinase family.

It is found in the cytoplasm. The enzyme catalyses L-glutamate + ATP = L-glutamyl 5-phosphate + ADP. Its pathway is amino-acid biosynthesis; L-proline biosynthesis; L-glutamate 5-semialdehyde from L-glutamate: step 1/2. In terms of biological role, catalyzes the transfer of a phosphate group to glutamate to form L-glutamate 5-phosphate. This Ruegeria sp. (strain TM1040) (Silicibacter sp.) protein is Glutamate 5-kinase.